The chain runs to 226 residues: Lipoprotein-releasing system ATP-binding protein LolD (226 aa).

The region spanning 6-226 is the ABC transporter domain; it reads LKLDNIRRAF…KMSEGLLVEV (221 aa). 42-49 is a binding site for ATP; sequence GPSGAGKS.

Belongs to the ABC transporter superfamily. Lipoprotein translocase (TC 3.A.1.125) family. As to quaternary structure, the complex is composed of two ATP-binding proteins (LolD) and two transmembrane proteins (LolC and LolE).

The protein resides in the cell inner membrane. Its function is as follows. Part of the ABC transporter complex LolCDE involved in the translocation of mature outer membrane-directed lipoproteins, from the inner membrane to the periplasmic chaperone, LolA. Responsible for the formation of the LolA-lipoprotein complex in an ATP-dependent manner. This chain is Lipoprotein-releasing system ATP-binding protein LolD, found in Paramagnetospirillum magneticum (strain ATCC 700264 / AMB-1) (Magnetospirillum magneticum).